Here is a 501-residue protein sequence, read N- to C-terminus: Glycerol kinase (501 aa).

Residue threonine 12 participates in ADP binding. ATP-binding residues include threonine 12, threonine 13, and serine 14. Residue threonine 12 participates in sn-glycerol 3-phosphate binding. Residue arginine 16 coordinates ADP. Residues arginine 82, glutamate 83, tyrosine 134, and aspartate 244 each coordinate sn-glycerol 3-phosphate. Positions 82, 83, 134, 244, and 245 each coordinate glycerol. Residues threonine 266 and glycine 310 each contribute to the ADP site. ATP is bound by residues threonine 266, glycine 310, glutamine 314, and glycine 411. Positions 411 and 415 each coordinate ADP.

The protein belongs to the FGGY kinase family.

The catalysed reaction is glycerol + ATP = sn-glycerol 3-phosphate + ADP + H(+). Its pathway is polyol metabolism; glycerol degradation via glycerol kinase pathway; sn-glycerol 3-phosphate from glycerol: step 1/1. Its activity is regulated as follows. Inhibited by fructose 1,6-bisphosphate (FBP). In terms of biological role, key enzyme in the regulation of glycerol uptake and metabolism. Catalyzes the phosphorylation of glycerol to yield sn-glycerol 3-phosphate. The chain is Glycerol kinase from Methylorubrum extorquens (strain PA1) (Methylobacterium extorquens).